The primary structure comprises 360 residues: DNA replication and repair protein RecF (360 aa).

Position 33–40 (Gly-33–Thr-40) interacts with ATP.

It belongs to the RecF family.

It is found in the cytoplasm. Functionally, the RecF protein is involved in DNA metabolism; it is required for DNA replication and normal SOS inducibility. RecF binds preferentially to single-stranded, linear DNA. It also seems to bind ATP. This Rickettsia conorii (strain ATCC VR-613 / Malish 7) protein is DNA replication and repair protein RecF.